The following is an 85-amino-acid chain: Coiled-coil-helix-coiled-coil-helix domain-containing protein 7 (85 aa).

The CHCH domain maps to 13 to 55; that stretch reads INPCLSESDASTRCLDENNYDKERCSTYFLKYKNCRKFWHSIM. 2 consecutive short sequence motifs (cx9C motif) follow at residues 16–26 and 37–47; these read CLSESDASTRC and CSTYFLKYKNC. 2 disulfide bridges follow: Cys-16–Cys-47 and Cys-26–Cys-37.

It belongs to the CHCHD7 family. As to quaternary structure, monomer.

It is found in the mitochondrion intermembrane space. This Macaca fascicularis (Crab-eating macaque) protein is Coiled-coil-helix-coiled-coil-helix domain-containing protein 7 (CHCHD7).